We begin with the raw amino-acid sequence, 263 residues long: Tryptophan synthase alpha chain (263 aa).

Residues Glu-49 and Asp-60 each act as proton acceptor in the active site.

It belongs to the TrpA family. As to quaternary structure, tetramer of two alpha and two beta chains.

The enzyme catalyses (1S,2R)-1-C-(indol-3-yl)glycerol 3-phosphate + L-serine = D-glyceraldehyde 3-phosphate + L-tryptophan + H2O. Its pathway is amino-acid biosynthesis; L-tryptophan biosynthesis; L-tryptophan from chorismate: step 5/5. Functionally, the alpha subunit is responsible for the aldol cleavage of indoleglycerol phosphate to indole and glyceraldehyde 3-phosphate. In Cereibacter sphaeroides (strain ATCC 17025 / ATH 2.4.3) (Rhodobacter sphaeroides), this protein is Tryptophan synthase alpha chain.